Here is a 236-residue protein sequence, read N- to C-terminus: Small ribosomal subunit protein uS2c (236 aa).

Belongs to the universal ribosomal protein uS2 family.

The protein resides in the plastid. It is found in the chloroplast. The protein is Small ribosomal subunit protein uS2c (rps2) of Lactuca sativa (Garden lettuce).